A 206-amino-acid polypeptide reads, in one-letter code: Holliday junction branch migration complex subunit RuvA (206 aa).

Residues Met-1 to Ser-63 are domain I. Positions Thr-64–Thr-142 are domain II. Residues Ile-143 to Gly-150 form a flexible linker region. The domain III stretch occupies residues Asn-151–Arg-206.

The protein belongs to the RuvA family. Homotetramer. Forms an RuvA(8)-RuvB(12)-Holliday junction (HJ) complex. HJ DNA is sandwiched between 2 RuvA tetramers; dsDNA enters through RuvA and exits via RuvB. An RuvB hexamer assembles on each DNA strand where it exits the tetramer. Each RuvB hexamer is contacted by two RuvA subunits (via domain III) on 2 adjacent RuvB subunits; this complex drives branch migration. In the full resolvosome a probable DNA-RuvA(4)-RuvB(12)-RuvC(2) complex forms which resolves the HJ.

The protein localises to the cytoplasm. In terms of biological role, the RuvA-RuvB-RuvC complex processes Holliday junction (HJ) DNA during genetic recombination and DNA repair, while the RuvA-RuvB complex plays an important role in the rescue of blocked DNA replication forks via replication fork reversal (RFR). RuvA specifically binds to HJ cruciform DNA, conferring on it an open structure. The RuvB hexamer acts as an ATP-dependent pump, pulling dsDNA into and through the RuvAB complex. HJ branch migration allows RuvC to scan DNA until it finds its consensus sequence, where it cleaves and resolves the cruciform DNA. The sequence is that of Holliday junction branch migration complex subunit RuvA from Corynebacterium urealyticum (strain ATCC 43042 / DSM 7109).